Consider the following 203-residue polypeptide: MKNRGRTKPKKNQWADHYTQKARDENYPARSVYKLMEIQKRFQVIKKGASVLDLGCAPGSWLIHAAELTGPSGRAVGIDLKPVDAALPPNAIAHTGDIFEMESTLGEAVGQDYDAVISDMAPATTGRKDIDAARSFALCEAALRVACGLLADGGNFVCKIFQGAEFKQFENQVKSRFTSHKIFKPDSCRKSSKEIYIIGLGKK.

S-adenosyl-L-methionine is bound by residues Gly-59, Trp-61, Asp-79, Asp-97, and Asp-119. Lys-159 (proton acceptor) is an active-site residue.

Belongs to the class I-like SAM-binding methyltransferase superfamily. RNA methyltransferase RlmE family.

The protein resides in the cytoplasm. It carries out the reaction uridine(2552) in 23S rRNA + S-adenosyl-L-methionine = 2'-O-methyluridine(2552) in 23S rRNA + S-adenosyl-L-homocysteine + H(+). Specifically methylates the uridine in position 2552 of 23S rRNA at the 2'-O position of the ribose in the fully assembled 50S ribosomal subunit. The sequence is that of Ribosomal RNA large subunit methyltransferase E from Desulforapulum autotrophicum (strain ATCC 43914 / DSM 3382 / VKM B-1955 / HRM2) (Desulfobacterium autotrophicum).